The chain runs to 355 residues: Guanine nucleotide-binding protein subunit alpha-14 (355 aa).

The G-alpha domain occupies 34–355 (RELKLLLLGT…QLNLREFNLV (322 aa)). Residues 37–50 (KLLLLGTGESGKST) form a G1 motif region. GTP is bound by residues 42 to 49 (GTGESGKS), 176 to 182 (LRVRVPT), 201 to 205 (DVGGQ), 270 to 273 (NKKD), and Ala-327. Mg(2+) contacts are provided by Ser-49 and Thr-182. The segment at 174 to 182 (DVLRVRVPT) is G2 motif. The interval 197–206 (FRMVDVGGQR) is G3 motif. The tract at residues 266–273 (ILFLNKKD) is G4 motif. The tract at residues 325-330 (TCATDT) is G5 motif.

Belongs to the G-alpha family. G(q) subfamily. G proteins are composed of 3 units; alpha, beta and gamma. The alpha chain contains the guanine nucleotide binding site.

Functionally, guanine nucleotide-binding proteins (G proteins) are involved as modulators or transducers in various transmembrane signaling systems. The chain is Guanine nucleotide-binding protein subunit alpha-14 (GNA14) from Bos taurus (Bovine).